The sequence spans 332 residues: UDP-N-acetylenolpyruvoylglucosamine reductase (332 aa).

Residues 55-221 (VGGAADLYVA…TQATLQLAPG (167 aa)) form the FAD-binding PCMH-type domain. Arg-200 is a catalytic residue. Ser-251 serves as the catalytic Proton donor. Glu-321 is an active-site residue.

It belongs to the MurB family. Requires FAD as cofactor.

The protein resides in the cytoplasm. The enzyme catalyses UDP-N-acetyl-alpha-D-muramate + NADP(+) = UDP-N-acetyl-3-O-(1-carboxyvinyl)-alpha-D-glucosamine + NADPH + H(+). The protein operates within cell wall biogenesis; peptidoglycan biosynthesis. Its function is as follows. Cell wall formation. This is UDP-N-acetylenolpyruvoylglucosamine reductase from Nostoc punctiforme (strain ATCC 29133 / PCC 73102).